The sequence spans 558 residues: DEAD-box ATP-dependent RNA helicase 49 (558 aa).

Residues Phe-16 to Ala-44 carry the Q motif motif. One can recognise a Helicase ATP-binding domain in the interval Ile-47 to Val-226. Ala-60–Thr-67 contributes to the ATP binding site. Residues Asp-174–Asp-177 carry the DEAD box motif. Residues Gln-255–Asp-402 form the Helicase C-terminal domain. A disordered region spans residues Lys-506–Leu-558. Residues Ser-521 to Lys-530 are compositionally biased toward basic and acidic residues. The segment covering Gln-549–Leu-558 has biased composition (acidic residues).

This sequence belongs to the DEAD box helicase family. DDX55/SPB4 subfamily.

It carries out the reaction ATP + H2O = ADP + phosphate + H(+). The chain is DEAD-box ATP-dependent RNA helicase 49 (RH49) from Arabidopsis thaliana (Mouse-ear cress).